The following is a 342-amino-acid chain: MNIPIDRVTQLQDIYIFETAINQTVSNIQKKKKNYFRVSLVLLTLLIISLVWCFSKYKLQQQEFIINNGNNSNIQQLQQQQQLNNLDSTTIYTTNDNGDINFHNDNNNNNNYRDNQSSNQKIEQQTLTALDYSLLFLPSSVLSLSLIFSLIIYFSIDDPFLFITRCNSTLYLFNIYYCFSNKKIMILPKKQLNNNYYSSDNYSNYQQQPQQQPQQQQQYNTGYNQHQYTDENEYNHRGNRLVSNPSSTIQRNKKFDTNNNYNFNNNNYNYNSNFNNNNNNNNINNNNNNTNNSNINIISNNNNNINNNNNIINNNNNNNNNNNINNSAYSNFNNSNGYNYTN.

3 consecutive transmembrane segments (helical) span residues 35–55 (YFRV…WCFS), 134–154 (LLFL…IIYF), and 161–180 (LFIT…YCFS). 2 disordered regions span residues 198-220 (SSDN…QQYN) and 311-342 (IINN…NYTN).

It is found in the membrane. This is an uncharacterized protein from Dictyostelium discoideum (Social amoeba).